The following is a 217-amino-acid chain: Uracil-DNA glycosylase (217 aa).

Asp62 serves as the catalytic Proton acceptor.

This sequence belongs to the uracil-DNA glycosylase (UDG) superfamily. UNG family.

The protein localises to the cytoplasm. It catalyses the reaction Hydrolyzes single-stranded DNA or mismatched double-stranded DNA and polynucleotides, releasing free uracil.. Functionally, excises uracil residues from the DNA which can arise as a result of misincorporation of dUMP residues by DNA polymerase or due to deamination of cytosine. This chain is Uracil-DNA glycosylase, found in Streptococcus gordonii (strain Challis / ATCC 35105 / BCRC 15272 / CH1 / DL1 / V288).